The primary structure comprises 334 residues: S-adenosylmethionine decarboxylase proenzyme 2 (334 aa).

Phe7 is a substrate binding site. Active-site residues include Glu8 and Glu11. Glu67 contacts substrate. The active-site Schiff-base intermediate with substrate; via pyruvic acid is the Ser68. Ser68 bears the Pyruvic acid (Ser); by autocatalysis mark. Cys82 acts as the Proton donor; for catalytic activity in catalysis. A substrate-binding site is contributed by Phe223. Residues Ser229 and His243 each act as proton acceptor; for processing activity in the active site. Position 247 (Glu247) interacts with substrate. A Phosphoserine modification is found at Ser298.

Belongs to the eukaryotic AdoMetDC family. Heterotetramer of two alpha and two beta chains. Pyruvate serves as cofactor. Is synthesized initially as an inactive proenzyme. Formation of the active enzyme involves a self-maturation process in which the active site pyruvoyl group is generated from an internal serine residue via an autocatalytic post-translational modification. Two non-identical subunits are generated from the proenzyme in this reaction, and the pyruvate is formed at the N-terminus of the alpha chain, which is derived from the carboxyl end of the proenzyme. The post-translation cleavage follows an unusual pathway, termed non-hydrolytic serinolysis, in which the side chain hydroxyl group of the serine supplies its oxygen atom to form the C-terminus of the beta chain, while the remainder of the serine residue undergoes an oxidative deamination to produce ammonia and the pyruvoyl group blocking the N-terminus of the alpha chain.

The catalysed reaction is S-adenosyl-L-methionine + H(+) = S-adenosyl 3-(methylsulfanyl)propylamine + CO2. It functions in the pathway amine and polyamine biosynthesis; S-adenosylmethioninamine biosynthesis; S-adenosylmethioninamine from S-adenosyl-L-methionine: step 1/1. Essential for biosynthesis of the polyamines spermidine and spermine. Promotes maintenance and self-renewal of embryonic stem cells, by maintaining spermine levels. The protein is S-adenosylmethionine decarboxylase proenzyme 2 (Amd2) of Mus spretus (Western Mediterranean mouse).